Reading from the N-terminus, the 293-residue chain is Aromatic amino acid exporter YddG (293 aa).

Residues 1–6 (MTSQKA) lie on the Cytoplasmic side of the membrane. Residues 7–27 (TLIGLVAIVLWSTMVGLIRGV) traverse the membrane as a helical segment. In terms of domain architecture, EamA 1 spans 15-137 (VLWSTMVGLI…IALTGVCWVL (123 aa)). Over 28–33 (SEGLGP) the chain is Periplasmic. Residues 34 to 54 (VGGAAMIYSLSGLLLIFTVGL) form a helical membrane-spanning segment. The Cytoplasmic segment spans residues 55–63 (PDIRRFPGR). A helical membrane pass occupies residues 64–84 (YLIAGSVLFVSYEICLALSLG). The Periplasmic portion of the chain corresponds to 85–92 (YAATRHQA). A helical membrane pass occupies residues 93-113 (IEVGMVNYLWPSLTILFAILF). Residues 114–119 (NGQKTN) are Cytoplasmic-facing. A helical membrane pass occupies residues 120–140 (WLIVPGLLIALTGVCWVLGGE). Residues 141–147 (NGLNPGE) lie on the Periplasmic side of the membrane. Residues 148–168 (IISNVATSPLSYLLAFLGAFI) traverse the membrane as a helical segment. Residues 167–285 (FIWATYCTVT…AVMVCVGSLL (119 aa)) form the EamA 2 domain. At 169-182 (WATYCTVTNKYARG) the chain is on the cytoplasmic side. The chain crosses the membrane as a helical span at residues 183 to 203 (FNGITVFVLLTAVALWLHYFL). The Periplasmic segment spans residues 204-207 (TPQP). The chain crosses the membrane as a helical span at residues 208 to 228 (AMIFSLPVIAKLFTAALTLGF). At 229 to 243 (AYAAWNVGILHGNVT) the chain is on the cytoplasmic side. A helical membrane pass occupies residues 244–264 (IMAVGSYFTPVMSSALAALLL). The Periplasmic portion of the chain corresponds to 265–267 (SSP). A helical membrane pass occupies residues 268 to 288 (LSFSFWQGAVMVCVGSLLCWL). The Cytoplasmic portion of the chain corresponds to 289-293 (ATRRR).

Belongs to the drug/metabolite transporter (DMT) superfamily. Aromatic amino acid/paraquat exporter (ArAA/P-E) (TC 2.A.7.17) family.

It localises to the cell inner membrane. In terms of biological role, amino acid transporter with broad substrate specificity. Required for resistance to methyl viologen. May function with OmpD porin. This chain is Aromatic amino acid exporter YddG (yddG), found in Salmonella typhimurium (strain 14028s / SGSC 2262).